Consider the following 86-residue polypeptide: Protein Tat (86 aa).

The interaction with human CREBBP stretch occupies residues M1–N24. The transactivation stretch occupies residues M1–G48. Residues C22, C25, and C27 each contribute to the Zn(2+) site. Residues C22–C37 are cysteine-rich. K28 carries the post-translational modification N6-acetyllysine; by host PCAF. 4 residues coordinate Zn(2+): C30, H33, C34, and C37. A core region spans residues F38 to G48. A compositionally biased stretch (basic residues) spans G48 to A58. The segment at G48–E86 is disordered. Residues R49–R57 carry the Nuclear localization signal, RNA-binding (TAR), and protein transduction motif. The segment at R49–E86 is interaction with the host capping enzyme RNGTT. 2 positions are modified to N6-acetyllysine; by host EP300 and GCN5L2: K50 and K51. Residues R52 and R53 each carry the asymmetric dimethylarginine; by host PRMT6 modification. Polar residues predominate over residues Q60–G79. A Glycyl lysine isopeptide (Lys-Gly) (interchain with G-Cter in ubiquitin) cross-link involves residue K71. The Cell attachment site signature appears at R78–D80.

Belongs to the lentiviruses Tat family. In terms of assembly, interacts with host CCNT1. Associates with the P-TEFb complex composed at least of Tat, P-TEFb (CDK9 and CCNT1), TAR RNA, RNA Pol II. Recruits the HATs CREBBP, TAF1/TFIID, EP300, PCAF and GCN5L2. Interacts with host KAT5/Tip60; this interaction targets the latter to degradation. Interacts with the host deacetylase SIRT1. Interacts with host capping enzyme RNGTT; this interaction stimulates RNGTT. Binds to host KDR, and to the host integrins ITGAV/ITGB3 and ITGA5/ITGB1. Interacts with host KPNB1/importin beta-1 without previous binding to KPNA1/importin alpha-1. Interacts with EIF2AK2. Interacts with host nucleosome assembly protein NAP1L1; this interaction may be required for the transport of Tat within the nucleus, since the two proteins interact at the nuclear rim. Interacts with host C1QBP/SF2P32; this interaction involves lysine-acetylated Tat. Interacts with the host chemokine receptors CCR2, CCR3 and CXCR4. Interacts with host DPP4/CD26; this interaction may trigger an anti-proliferative effect. Interacts with host LDLR. Interacts with the host extracellular matrix metalloproteinase MMP1. Interacts with host PRMT6; this interaction mediates Tat's methylation. Interacts with, and is ubiquitinated by MDM2/Hdm2. Interacts with host PSMC3 and HTATIP2. Interacts with STAB1; this interaction may overcome SATB1-mediated repression of IL2 and IL2RA (interleukin) in T cells by binding to the same domain than HDAC1. Interacts (when acetylated) with human CDK13, thereby increasing HIV-1 mRNA splicing and promoting the production of the doubly spliced HIV-1 protein Nef. Interacts with host TBP; this interaction modulates the activity of transcriptional pre-initiation complex. Interacts with host RELA. Interacts with host PLSCR1; this interaction negatively regulates Tat transactivation activity by altering its subcellular distribution. In terms of processing, asymmetrical arginine methylation by host PRMT6 seems to diminish the transactivation capacity of Tat and affects the interaction with host CCNT1. Acetylation by EP300, CREBBP, GCN5L2/GCN5 and PCAF regulates the transactivation activity of Tat. EP300-mediated acetylation of Lys-50 promotes dissociation of Tat from the TAR RNA through the competitive binding to PCAF's bromodomain. In addition, the non-acetylated Tat's N-terminus can also interact with PCAF. PCAF-mediated acetylation of Lys-28 enhances Tat's binding to CCNT1. Lys-50 is deacetylated by SIRT1. Post-translationally, polyubiquitination by host MDM2 does not target Tat to degradation, but activates its transactivation function and fosters interaction with CCNT1 and TAR RNA. In terms of processing, phosphorylated by EIF2AK2 on serine and threonine residues adjacent to the basic region important for TAR RNA binding and function. Phosphorylation of Tat by EIF2AK2 is dependent on the prior activation of EIF2AK2 by dsRNA.

It is found in the host nucleus. It localises to the host nucleolus. The protein localises to the host cytoplasm. The protein resides in the secreted. In terms of biological role, transcriptional activator that increases RNA Pol II processivity, thereby increasing the level of full-length viral transcripts. Recognizes a hairpin structure at the 5'-LTR of the nascent viral mRNAs referred to as the transactivation responsive RNA element (TAR) and recruits the cyclin T1-CDK9 complex (P-TEFb complex) that will in turn hyperphosphorylate the RNA polymerase II to allow efficient elongation. The CDK9 component of P-TEFb and other Tat-activated kinases hyperphosphorylate the C-terminus of RNA Pol II that becomes stabilized and much more processive. Other factors such as HTATSF1/Tat-SF1, SUPT5H/SPT5, and HTATIP2 are also important for Tat's function. Besides its effect on RNA Pol II processivity, Tat induces chromatin remodeling of proviral genes by recruiting the histone acetyltransferases (HATs) CREBBP, EP300 and PCAF to the chromatin. This also contributes to the increase in proviral transcription rate, especially when the provirus integrates in transcriptionally silent region of the host genome. To ensure maximal activation of the LTR, Tat mediates nuclear translocation of NF-kappa-B by interacting with host RELA. Through its interaction with host TBP, Tat may also modulate transcription initiation. Tat can reactivate a latently infected cell by penetrating in it and transactivating its LTR promoter. In the cytoplasm, Tat is thought to act as a translational activator of HIV-1 mRNAs. Its function is as follows. Extracellular circulating Tat can be endocytosed by surrounding uninfected cells via the binding to several surface receptors such as CD26, CXCR4, heparan sulfate proteoglycans (HSPG) or LDLR. Neurons are rarely infected, but they internalize Tat via their LDLR. Through its interaction with nuclear HATs, Tat is potentially able to control the acetylation-dependent cellular gene expression. Modulates the expression of many cellular genes involved in cell survival, proliferation or in coding for cytokines or cytokine receptors. Tat plays a role in T-cell and neurons apoptosis. Tat induced neurotoxicity and apoptosis probably contribute to neuroAIDS. Circulating Tat also acts as a chemokine-like and/or growth factor-like molecule that binds to specific receptors on the surface of the cells, affecting many cellular pathways. In the vascular system, Tat binds to ITGAV/ITGB3 and ITGA5/ITGB1 integrins dimers at the surface of endothelial cells and competes with bFGF for heparin-binding sites, leading to an excess of soluble bFGF. In Human immunodeficiency virus type 1 group M subtype B (isolate PCV12) (HIV-1), this protein is Protein Tat.